A 220-amino-acid polypeptide reads, in one-letter code: CASP-like protein 1E1 (220 aa).

Residues 1-57 lie on the Cytoplasmic side of the membrane; the sequence is METPTPRVKPGFNGVGVGMGSSVNGSSRRAGYYMGPAGAVAVAGGGRAAAAAPVDGC. Residues 58 to 78 traverse the membrane as a helical segment; that stretch reads SVALRVFVLAATLVSAVVMGV. Residues 79 to 108 are Extracellular-facing; that stretch reads DRQTSTIRITVTDALPPLEVPLTANWSYSS. A glycan (N-linked (GlcNAc...) asparagine) is linked at Asn-103. Residues 109–129 traverse the membrane as a helical segment; it reads AFVYFVVANAMVCLFSAAALA. Topologically, residues 130–144 are cytoplasmic; it reads ACRSRAAMVPVMVGD. Residues 145–165 traverse the membrane as a helical segment; the sequence is LLALALLYSAVGAAAEFGILG. At 166–187 the chain is on the extracellular side; the sequence is ERGNSHVRWPKVCNVYGRFCER. A helical membrane pass occupies residues 188–208; it reads AMAAVIVSLIAAFANLVLLML. At 209-220 the chain is on the cytoplasmic side; it reads NILTIHKSSSYY.

It belongs to the Casparian strip membrane proteins (CASP) family. As to quaternary structure, homodimer and heterodimers.

The protein localises to the cell membrane. In Zea mays (Maize), this protein is CASP-like protein 1E1.